The sequence spans 643 residues: Phosphomethylpyrimidine synthase (643 aa).

Substrate is bound by residues Asn248, Met277, Tyr306, His342, 362–364 (SRG), 403–406 (DGLR), and Glu442. Residue His446 participates in Zn(2+) binding. Tyr469 is a substrate binding site. Zn(2+) is bound at residue His510. Cys590, Cys593, and Cys598 together coordinate [4Fe-4S] cluster.

It belongs to the ThiC family. Homodimer. It depends on [4Fe-4S] cluster as a cofactor.

The enzyme catalyses 5-amino-1-(5-phospho-beta-D-ribosyl)imidazole + S-adenosyl-L-methionine = 4-amino-2-methyl-5-(phosphooxymethyl)pyrimidine + CO + 5'-deoxyadenosine + formate + L-methionine + 3 H(+). The protein operates within cofactor biosynthesis; thiamine diphosphate biosynthesis. Catalyzes the synthesis of the hydroxymethylpyrimidine phosphate (HMP-P) moiety of thiamine from aminoimidazole ribotide (AIR) in a radical S-adenosyl-L-methionine (SAM)-dependent reaction. This chain is Phosphomethylpyrimidine synthase, found in Burkholderia ambifaria (strain MC40-6).